The primary structure comprises 439 residues: Glucose-1-phosphate adenylyltransferase (439 aa).

Alpha-D-glucose 1-phosphate contacts are provided by residues Gly-172, 187–188 (EK), and Ser-219.

Belongs to the bacterial/plant glucose-1-phosphate adenylyltransferase family. Homotetramer.

It carries out the reaction alpha-D-glucose 1-phosphate + ATP + H(+) = ADP-alpha-D-glucose + diphosphate. It functions in the pathway glycan biosynthesis; glycogen biosynthesis. Involved in the biosynthesis of ADP-glucose, a building block required for the elongation reactions to produce glycogen. Catalyzes the reaction between ATP and alpha-D-glucose 1-phosphate (G1P) to produce pyrophosphate and ADP-Glc. The polypeptide is Glucose-1-phosphate adenylyltransferase (Synechocystis sp. (strain ATCC 27184 / PCC 6803 / Kazusa)).